Consider the following 188-residue polypeptide: 3-deoxy-D-manno-octulosonate 8-phosphate phosphatase KdsC (188 aa).

Residues D32 and D34 each coordinate Mg(2+). Residues D34, 55–59 (NVRDG), R63, R78, R86, and K102 each bind substrate. Mg(2+) is bound at residue D125.

As to quaternary structure, homotetramer. Mg(2+) serves as cofactor. Requires Co(2+) as cofactor.

The enzyme catalyses 3-deoxy-alpha-D-manno-2-octulosonate-8-phosphate + H2O = 3-deoxy-alpha-D-manno-oct-2-ulosonate + phosphate. The protein operates within carbohydrate biosynthesis; 3-deoxy-D-manno-octulosonate biosynthesis; 3-deoxy-D-manno-octulosonate from D-ribulose 5-phosphate: step 3/3. It participates in bacterial outer membrane biogenesis; lipopolysaccharide biosynthesis. With respect to regulation, inhibited by calcium, cadmium, mercury, and copper ions. In terms of biological role, catalyzes the hydrolysis of 3-deoxy-D-manno-octulosonate 8-phosphate (KDO 8-P) to 3-deoxy-D-manno-octulosonate (KDO) and inorganic phosphate. The chain is 3-deoxy-D-manno-octulosonate 8-phosphate phosphatase KdsC from Escherichia coli (strain B / BL21-DE3).